The chain runs to 334 residues: Inositol 2-dehydrogenase (334 aa).

It belongs to the Gfo/Idh/MocA family. As to quaternary structure, homotetramer.

It catalyses the reaction myo-inositol + NAD(+) = scyllo-inosose + NADH + H(+). Its function is as follows. Involved in the oxidation of myo-inositol (MI) to 2-keto-myo-inositol (2KMI or 2-inosose). The chain is Inositol 2-dehydrogenase from Cereibacter sphaeroides (strain ATCC 17029 / ATH 2.4.9) (Rhodobacter sphaeroides).